A 207-amino-acid polypeptide reads, in one-letter code: Guanylate kinase (207 aa).

Residues 4–184 form the Guanylate kinase-like domain; the sequence is GILFIISAPS…AVNDLITIIT (181 aa). ATP is bound at residue 11–18; it reads APSGTGKS.

It belongs to the guanylate kinase family.

The protein localises to the cytoplasm. The catalysed reaction is GMP + ATP = GDP + ADP. Functionally, essential for recycling GMP and indirectly, cGMP. This chain is Guanylate kinase (gmk), found in Buchnera aphidicola subsp. Acyrthosiphon pisum (strain APS) (Acyrthosiphon pisum symbiotic bacterium).